The primary structure comprises 451 residues: mRNA cleavage and polyadenylation factor CLP1 (451 aa).

ATP is bound by residues lysine 75 and 136 to 141 (NTGKTA).

The protein belongs to the Clp1 family. Clp1 subfamily. Component of a pre-mRNA cleavage factor complex. Interacts directly with PCF11.

Its subcellular location is the nucleus. Its function is as follows. Required for endonucleolytic cleavage during polyadenylation-dependent pre-mRNA 3'-end formation. The protein is mRNA cleavage and polyadenylation factor CLP1 of Candida glabrata (strain ATCC 2001 / BCRC 20586 / JCM 3761 / NBRC 0622 / NRRL Y-65 / CBS 138) (Yeast).